A 438-amino-acid chain; its full sequence is Transposon Ty2-OR2 Gag polyprotein (438 aa).

Disordered stretches follow at residues 1–88 (MESQ…YQQH), 365–397 (NVSRTSPNTTNTKVTTRNYHRTNSSKPRAAKAH), and 419–438 (SSQYLSDDNELSLRPATERI). 2 stretches are compositionally biased toward polar residues: residues 19–39 (ASVTSKEVPSNQDPLAVSASN) and 49–60 (KVNSQEETTPGT). The interval 295 to 397 (ENNINVSDRL…SSKPRAAKAH (103 aa)) is RNA-binding. Residues 369–381 (TSPNTTNTKVTTR) show a composition bias toward low complexity.

Homotrimer.

The protein localises to the cytoplasm. Its function is as follows. Capsid protein (CA) is the structural component of the virus-like particle (VLP), forming the shell that encapsulates the retrotransposons dimeric RNA genome. The particles are assembled from trimer-clustered units and there are holes in the capsid shells that allow for the diffusion of macromolecules. CA also has nucleocapsid-like chaperone activity, promoting primer tRNA(i)-Met annealing to the multipartite primer-binding site (PBS), dimerization of Ty2 RNA and initiation of reverse transcription. This Saccharomyces cerevisiae (strain ATCC 204508 / S288c) (Baker's yeast) protein is Transposon Ty2-OR2 Gag polyprotein (TY2A-OR2).